The following is a 144-amino-acid chain: Cysteine desulfuration protein SufE (144 aa).

The active-site Cysteine persulfide intermediate is the cysteine 51.

This sequence belongs to the SufE family. In terms of assembly, homodimer. Interacts with SufS.

The protein localises to the cytoplasm. Its pathway is cofactor biosynthesis; iron-sulfur cluster biosynthesis. In terms of biological role, participates in cysteine desulfuration mediated by SufS. Cysteine desulfuration mobilizes sulfur from L-cysteine to yield L-alanine and constitutes an essential step in sulfur metabolism for biosynthesis of a variety of sulfur-containing biomolecules. Functions as a sulfur acceptor for SufS, by mediating the direct transfer of the sulfur atom from the S-sulfanylcysteine of SufS, an intermediate product of cysteine desulfuration process. The sequence is that of Cysteine desulfuration protein SufE from Wigglesworthia glossinidia brevipalpis.